We begin with the raw amino-acid sequence, 1451 residues long: MAREIHKIASLRRESSLWRRGDDGVYFSRSSTGASSSRFRDEEDDEEALRWAALERLPTRDRVRRGILLQAAEGNGEKVEVDVGRMGARESRALIARLIRAADDDHALFLLKLKDRMDRVGIDYPTIEVRFEKLEVEAEVHVGNRGLPTLLNSIINTVQAIGNALHISPTRKQPMTVLHDVSGIIKPRRMTLLLGPPGSGKTTLLLALAGKLEDNLKVSGKVTYNGHGMDEFVPQRTAAYISQHDLHIGEMTVRETLAFSARCQGVGSRYDMLTELSRREKAENIKPDQDIDVYMKASAIGGQESSVVTEYILKILGLDICADTVVGNDMLRGVSGGQRKRVTTGEMLVGPARALFMDEISTGLDSSTTYQIVNSIGQTIRILGGTAVISLLQPAPETYNLFDDIILLSDGQIVYQGAREHVLEFFELMGFRCPQRKGVADFLQEVTSKKDQEQYWYRNDIPYSFVPVKQFADAFRSFHVGQSIQNELSEPFDRSRSHPASLATSKFGVSWMALLKANIDRELLLMKRNSFVYIFKAANLTLTAFLVMTTFLRTKMRHDTTYGTIYMGALYFALDTIMFNGFAELGMTVMKLPVFFKQRDLLFFPAWTYTIPSWILQIPVTFFEVGVYVFTTYYVVGFDPNVSRFFKQYLLLVALNQMSSSLFRFIAGIGRDMVVSQTFGPLSLLAFTALGGFILARPDVKKWWIWGYWISPLSYAQNAISTNEFLGRSWNKSFPGQNDTVGISILKSRGIFTEAKWYWIGFGALIGYTLLFNLLYTVALSFLKPLGDSYPSVPEDALKEKRANQTGEILDSCEEKKSRKKEQSQSVNQKHWNNTAESSQIRQGILPFAQLSLSFNDIKYSVDMPEAMTAQGVTEERLLLLKGVSGSFRPGVLTALMGVSGAGKTTLMDVLAGRKTGGYIEGDITISGYPKKQETFARISGYCEQNDIHSPHVTVYESLVFSAWMRLPSEVDSETRKMFIEEVMELVELTSLRGALVGLPGVNGLSTEQRKRLTVAVELVANPSIIFMDEPTSGLDARAAAIVMRTVRKTVDTGRTVVCTIHQPSIDIFEAFDELFLMKRGGEEIYVGPLGQNSSKLIEYFEGIEGISKIKDGYNPATWMLEVTSTTQEEMLGIDFSEIYKRSELYQRNKELIQDLSTPTPGSTDLHFPTQYSRSFFTQCIACLWKHKLSYWRNPSYTAVRLLFTIIIALLFGTMFWDLGRKTKKEQDLFNAVGSMYAAVLYIGIQNSGCVQPVVVVERTVFYRERAAGMYSGFPYAFGQVAIELPYILVQTLVYGVLVYSMIGFEWTVAKFIWYLFFMYFTLLYFTFFGMMAVGLTPNESIAAIISPAIYNAWNLFSGYLIPRPKIPVWWRWYCWICPVAWTLYGLVASQFGNIQTKLDGKDQTVAQFITEYYGFHHDLLWLVAVVHVVFTVMFAFLFSFAIMKFNFQRR.

An ABC transporter 1 domain is found at glycine 162 to glutamine 435. Glycine 195–threonine 202 is a binding site for ATP. The region spanning alanine 513–phenylalanine 725 is the ABC transmembrane type-2 1 domain. 6 consecutive transmembrane segments (helical) span residues phenylalanine 531–phenylalanine 551, glycine 563–alanine 583, isoleucine 618–phenylalanine 638, leucine 650–glycine 670, valine 674–isoleucine 694, and isoleucine 760–leucine 780. Residues isoleucine 809 to threonine 835 form a disordered region. Positions cysteine 813–glutamine 823 are enriched in basic and acidic residues. The region spanning leucine 853 to glutamate 1105 is the ABC transporter 2 domain. Glycine 898–threonine 905 contacts ATP. Residues threonine 1178–phenylalanine 1392 form the ABC transmembrane type-2 2 domain. The next 7 membrane-spanning stretches (helical) occupy residues tyrosine 1197–tryptophan 1217, tyrosine 1237–valine 1257, leucine 1285–phenylalanine 1305, phenylalanine 1312–methionine 1332, isoleucine 1342–isoleucine 1362, tryptophan 1373–glycine 1393, and leucine 1423–isoleucine 1443.

The protein belongs to the ABC transporter superfamily. ABCG family. PDR (TC 3.A.1.205) subfamily.

The protein localises to the membrane. In terms of biological role, may be a general defense protein. This Oryza sativa subsp. japonica (Rice) protein is ABC transporter G family member 32.